We begin with the raw amino-acid sequence, 332 residues long: Anthranilate phosphoribosyltransferase (332 aa).

5-phospho-alpha-D-ribose 1-diphosphate-binding positions include Gly-78, 81-82, Thr-86, 88-91, 106-114, and Ala-118; these read GD, NVST, and KHGNRAASS. Gly-78 provides a ligand contact to anthranilate. Ser-90 is a binding site for Mg(2+). An anthranilate-binding site is contributed by Asn-109. Arg-164 contributes to the anthranilate binding site. Mg(2+) is bound by residues Asp-223 and Glu-224.

This sequence belongs to the anthranilate phosphoribosyltransferase family. As to quaternary structure, homodimer. Mg(2+) is required as a cofactor.

It carries out the reaction N-(5-phospho-beta-D-ribosyl)anthranilate + diphosphate = 5-phospho-alpha-D-ribose 1-diphosphate + anthranilate. It functions in the pathway amino-acid biosynthesis; L-tryptophan biosynthesis; L-tryptophan from chorismate: step 2/5. In terms of biological role, catalyzes the transfer of the phosphoribosyl group of 5-phosphorylribose-1-pyrophosphate (PRPP) to anthranilate to yield N-(5'-phosphoribosyl)-anthranilate (PRA). This is Anthranilate phosphoribosyltransferase from Sphingopyxis alaskensis (strain DSM 13593 / LMG 18877 / RB2256) (Sphingomonas alaskensis).